The following is a 316-amino-acid chain: Polyprenyl transferase prhE (316 aa).

A run of 9 helical transmembrane segments spans residues 45 to 65 (VVGVAYTAAISPVTLPSTFLL), 69 to 89 (VILSLWGFCIRSAGCAWNDLI), 114 to 134 (GAALLAAFMFGCGGSLLLLLP), 135 to 155 (SQCAFEAAIVVFFALLYPFGK), 163 to 183 (LILTNIAWAIPMAMSSLDMSP), 188 to 208 (IPTLAMSFSIASVIVMIDIVY), 231 to 253 (ITDQIAYGLFFSGTLSLLVGGIL), 257 to 276 (GFPFLIFSVGGHFLGFLRFL), and 296 to 316 (SCLLATMLLVFGLCFEYCVRL).

This sequence belongs to the UbiA prenyltransferase family. Requires Mg(2+) as cofactor.

The protein localises to the membrane. It carries out the reaction 3,5-dimethylorsellinate + (2E,6E)-farnesyl diphosphate = (3R)-3-farnesyl-6-hydroxy-2,3,5-trimethyl-4-oxocyclohexa-1,5-diene-1-carboxylate + diphosphate + H(+). It participates in secondary metabolite biosynthesis; terpenoid biosynthesis. Functionally, polyprenyl transferase; part of the gene cluster that mediates the biosynthesis of paraherquonin, a meroterpenoid with a unique, highly congested hexacyclic molecular architecture. The first step of the pathway is the synthesis of 3,5-dimethylorsellinic acid (DMOA) by the polyketide synthase prhL. Synthesis of DMOA is followed by farnesylation by the prenyltransferase prhE, methylesterification by the methyl-transferase prhM, epoxidation of the prenyl chain by the flavin-dependent monooxygenase prhF, and cyclization of the farnesyl moiety by the terpene cyclase prhH, to yield the tetracyclic intermediate, protoaustinoid A. The short chain dehydrogenase prhI then oxidizes the C-3 alcohol group of the terpene cyclase product to transform protoaustinoid A into protoaustinoid B. The FAD-binding monooxygenase prhJ catalyzes the oxidation of protoaustinoid B into preaustinoid A which is further oxidized into preaustinoid A1 by FAD-binding monooxygenase phrK. Finally, prhA leads to berkeleydione via the berkeleyone B intermediate. PrhA is a multifunctional dioxygenase that first desaturates at C5-C6 to form berkeleyone B, followed by rearrangement of the A/B-ring to form the cycloheptadiene moiety in berkeleydione. Berkeleydione serves as the key intermediate for the biosynthesis of paraherquonin as well as many other meroterpenoids. The cytochrome P450 monooxygenases prhB, prhD, and prhN, as well as the isomerase prhC, are probably involved in the late stage of paraherquonin biosynthesis, after the production of berkeleydione. Especially prhC might be a multifunctional enzyme that catalyzes the D-ring expansion via intramolecular methoxy rearrangement, as well as the hydrolysis of the expanded D-ring. The polypeptide is Polyprenyl transferase prhE (Penicillium brasilianum).